We begin with the raw amino-acid sequence, 89 residues long: Large ribosomal subunit protein bL28 (89 aa).

This sequence belongs to the bacterial ribosomal protein bL28 family.

This is Large ribosomal subunit protein bL28 from Chlamydia pneumoniae (Chlamydophila pneumoniae).